Here is a 22-residue protein sequence, read N- to C-terminus: Unknown protein 20 from 2D-PAGE (22 aa).

This is Unknown protein 20 from 2D-PAGE from Bombyx mori (Silk moth).